The primary structure comprises 201 residues: Basic helix-loop-helix transcription factor scleraxis (201 aa).

Disordered regions lie at residues 1-92 and 148-177; these read MSFA…NSVN and AFFH…QPKQ. The span at 59–69 shows a compositional bias: gly residues; that stretch reads RRAGGGGPGGR. Over residues 70 to 88 the composition is skewed to basic and acidic residues; sequence PGREPRQRHTANARERDRT. The bHLH domain maps to 75-127; it reads RQRHTANARERDRTNSVNTAFTALRTLIPTEPADRKLSKIETLRLASSYISHL. Over residues 157–167 the composition is skewed to pro residues; that stretch reads SPPPPPPPPPA.

Efficient DNA binding requires dimerization with another bHLH protein. Dimerizes and binds the E-box consensus sequence with E12.

The protein localises to the nucleus. Plays an early essential role in mesoderm formation, as well as a later role in formation of somite-derived chondrogenic lineages. The polypeptide is Basic helix-loop-helix transcription factor scleraxis (SCX) (Homo sapiens (Human)).